We begin with the raw amino-acid sequence, 324 residues long: Myb-like DNA-binding protein myb-1 (324 aa).

2 HTH myb-type domains span residues 4–59 and 60–110; these read MPDQ…KPGL and NHGP…NRKK. Residues 107 to 231 are disordered; the sequence is NRKKNQLRRQ…PTGSTLRLLT (125 aa). Residues 155 to 165 show a composition bias toward polar residues; that stretch reads RRPSSPSSFND. The segment covering 166–175 has biased composition (basic and acidic residues); it reads SLHHRVHESI. Composition is skewed to low complexity over residues 183–192 and 222–231; these read QQQQQQQQQQ and PTGSTLRLLT.

Its subcellular location is the nucleus. The polypeptide is Myb-like DNA-binding protein myb-1 (rca-1) (Neurospora crassa (strain ATCC 24698 / 74-OR23-1A / CBS 708.71 / DSM 1257 / FGSC 987)).